A 273-amino-acid chain; its full sequence is Large ribosomal subunit protein uL2c (273 aa).

The tract at residues 223-273 is disordered; the sequence is MNPVDHPHGGGEGRAPIGRKKPTTPWGYPALGRRSRKRNKYSDSFILRRRK.

The protein belongs to the universal ribosomal protein uL2 family. Part of the 50S ribosomal subunit.

Its subcellular location is the plastid. The protein localises to the chloroplast. This Calycanthus floridus var. glaucus (Eastern sweetshrub) protein is Large ribosomal subunit protein uL2c (rpl2).